The sequence spans 186 residues: Adenine phosphoribosyltransferase (186 aa).

It belongs to the purine/pyrimidine phosphoribosyltransferase family. In terms of assembly, homodimer.

It is found in the cytoplasm. The enzyme catalyses AMP + diphosphate = 5-phospho-alpha-D-ribose 1-diphosphate + adenine. It participates in purine metabolism; AMP biosynthesis via salvage pathway; AMP from adenine: step 1/1. In terms of biological role, catalyzes a salvage reaction resulting in the formation of AMP, that is energically less costly than de novo synthesis. This chain is Adenine phosphoribosyltransferase, found in Xanthomonas oryzae pv. oryzae (strain MAFF 311018).